Consider the following 67-residue polypeptide: Retron Se72 cold shock-like protein (67 aa).

The CSD domain maps to 1–66 (MENGFVNFYD…KGFKAVAIQK (66 aa)).

In terms of biological role, probable cold shock-like component of antiviral defense system retron Se72, composed of a non-coding RNA (ncRNA), a reverse transcriptase (RT) and this protein. Expression of retron Se72 confers protection against bacteriophage lambda. At multiplicity of infection (MOI) of 0.02 cultures slow growth when infected with lambda but do not collapse, at MOI 2 cultures enter growth stasis. This Salmonella heidelberg (strain 579083-10) protein is Retron Se72 cold shock-like protein.